A 431-amino-acid polypeptide reads, in one-letter code: Trigger factor (431 aa).

Residues 164 to 249 (GDIAVIDFKG…IKEIKRKELP (86 aa)) enclose the PPIase FKBP-type domain.

Belongs to the FKBP-type PPIase family. Tig subfamily.

It localises to the cytoplasm. The catalysed reaction is [protein]-peptidylproline (omega=180) = [protein]-peptidylproline (omega=0). Its function is as follows. Involved in protein export. Acts as a chaperone by maintaining the newly synthesized protein in an open conformation. Functions as a peptidyl-prolyl cis-trans isomerase. This chain is Trigger factor, found in Clostridium acetobutylicum (strain ATCC 824 / DSM 792 / JCM 1419 / IAM 19013 / LMG 5710 / NBRC 13948 / NRRL B-527 / VKM B-1787 / 2291 / W).